Reading from the N-terminus, the 131-residue chain is S-adenosylmethionine decarboxylase proenzyme (131 aa).

The active-site Schiff-base intermediate with substrate; via pyruvic acid is serine 64. Serine 64 carries the pyruvic acid (Ser); by autocatalysis modification. Histidine 69 functions as the Proton acceptor; for processing activity in the catalytic mechanism. Cysteine 84 serves as the catalytic Proton donor; for catalytic activity.

This sequence belongs to the prokaryotic AdoMetDC family. Type 1 subfamily. As to quaternary structure, heterotetramer of two alpha and two beta chains arranged as a dimer of alpha/beta heterodimers. Pyruvate is required as a cofactor. Post-translationally, is synthesized initially as an inactive proenzyme. Formation of the active enzyme involves a self-maturation process in which the active site pyruvoyl group is generated from an internal serine residue via an autocatalytic post-translational modification. Two non-identical subunits are generated from the proenzyme in this reaction, and the pyruvate is formed at the N-terminus of the alpha chain, which is derived from the carboxyl end of the proenzyme. The post-translation cleavage follows an unusual pathway, termed non-hydrolytic serinolysis, in which the side chain hydroxyl group of the serine supplies its oxygen atom to form the C-terminus of the beta chain, while the remainder of the serine residue undergoes an oxidative deamination to produce ammonia and the pyruvoyl group blocking the N-terminus of the alpha chain.

It catalyses the reaction S-adenosyl-L-methionine + H(+) = S-adenosyl 3-(methylsulfanyl)propylamine + CO2. Its pathway is amine and polyamine biosynthesis; S-adenosylmethioninamine biosynthesis; S-adenosylmethioninamine from S-adenosyl-L-methionine: step 1/1. Functionally, catalyzes the decarboxylation of S-adenosylmethionine to S-adenosylmethioninamine (dcAdoMet), the propylamine donor required for the synthesis of the polyamines spermine and spermidine from the diamine putrescine. This is S-adenosylmethionine decarboxylase proenzyme from Thermoplasma acidophilum (strain ATCC 25905 / DSM 1728 / JCM 9062 / NBRC 15155 / AMRC-C165).